Consider the following 277-residue polypeptide: 2-dehydro-3-deoxyphosphooctonate aldolase (277 aa).

Belongs to the KdsA family.

The protein resides in the cytoplasm. It catalyses the reaction D-arabinose 5-phosphate + phosphoenolpyruvate + H2O = 3-deoxy-alpha-D-manno-2-octulosonate-8-phosphate + phosphate. Its pathway is carbohydrate biosynthesis; 3-deoxy-D-manno-octulosonate biosynthesis; 3-deoxy-D-manno-octulosonate from D-ribulose 5-phosphate: step 2/3. It participates in bacterial outer membrane biogenesis; lipopolysaccharide biosynthesis. The protein is 2-dehydro-3-deoxyphosphooctonate aldolase of Alkalilimnicola ehrlichii (strain ATCC BAA-1101 / DSM 17681 / MLHE-1).